A 443-amino-acid polypeptide reads, in one-letter code: Chromosome partition protein MukF (443 aa).

Residues 209–237 are leucine-zipper; that stretch reads LDETSINLRELQDTLNAAGDKLQSQLLRI.

Belongs to the MukF family. In terms of assembly, interacts, and probably forms a ternary complex, with MukE and MukB via its C-terminal region. The complex formation is stimulated by calcium or magnesium. It is required for an interaction between MukE and MukB.

It is found in the cytoplasm. Its subcellular location is the nucleoid. Functionally, involved in chromosome condensation, segregation and cell cycle progression. May participate in facilitating chromosome segregation by condensation DNA from both sides of a centrally located replisome during cell division. Not required for mini-F plasmid partitioning. Probably acts via its interaction with MukB and MukE. Overexpression results in anucleate cells. It has a calcium binding activity. The chain is Chromosome partition protein MukF from Haemophilus ducreyi (strain 35000HP / ATCC 700724).